Consider the following 100-residue polypeptide: Aspartyl/glutamyl-tRNA(Asn/Gln) amidotransferase subunit C (100 aa).

The protein belongs to the GatC family. As to quaternary structure, heterotrimer of A, B and C subunits.

It carries out the reaction L-glutamyl-tRNA(Gln) + L-glutamine + ATP + H2O = L-glutaminyl-tRNA(Gln) + L-glutamate + ADP + phosphate + H(+). It catalyses the reaction L-aspartyl-tRNA(Asn) + L-glutamine + ATP + H2O = L-asparaginyl-tRNA(Asn) + L-glutamate + ADP + phosphate + 2 H(+). Allows the formation of correctly charged Asn-tRNA(Asn) or Gln-tRNA(Gln) through the transamidation of misacylated Asp-tRNA(Asn) or Glu-tRNA(Gln) in organisms which lack either or both of asparaginyl-tRNA or glutaminyl-tRNA synthetases. The reaction takes place in the presence of glutamine and ATP through an activated phospho-Asp-tRNA(Asn) or phospho-Glu-tRNA(Gln). The sequence is that of Aspartyl/glutamyl-tRNA(Asn/Gln) amidotransferase subunit C from Rickettsia typhi (strain ATCC VR-144 / Wilmington).